A 393-amino-acid chain; its full sequence is 8-amino-7-oxononanoate synthase (393 aa).

Residue 107 to 108 (GF) participates in pyridoxal 5'-phosphate binding. Residue His-132 coordinates substrate. Pyridoxal 5'-phosphate-binding positions include Ser-180, 205–208 (DDAH), and 236–239 (TLSK). Lys-239 is modified (N6-(pyridoxal phosphate)lysine). Residue Thr-353 participates in substrate binding.

This sequence belongs to the class-II pyridoxal-phosphate-dependent aminotransferase family. BioF subfamily. In terms of assembly, homodimer. Pyridoxal 5'-phosphate is required as a cofactor.

It catalyses the reaction 6-carboxyhexanoyl-[ACP] + L-alanine + H(+) = (8S)-8-amino-7-oxononanoate + holo-[ACP] + CO2. It functions in the pathway cofactor biosynthesis; biotin biosynthesis. Its function is as follows. Catalyzes the decarboxylative condensation of pimeloyl-[acyl-carrier protein] and L-alanine to produce 8-amino-7-oxononanoate (AON), [acyl-carrier protein], and carbon dioxide. The chain is 8-amino-7-oxononanoate synthase from Coprothermobacter proteolyticus (strain ATCC 35245 / DSM 5265 / OCM 4 / BT).